Consider the following 469-residue polypeptide: 3-isopropylmalate dehydratase large subunit (469 aa).

3 residues coordinate [4Fe-4S] cluster: C347, C408, and C411.

This sequence belongs to the aconitase/IPM isomerase family. LeuC type 1 subfamily. Heterodimer of LeuC and LeuD. [4Fe-4S] cluster is required as a cofactor.

It carries out the reaction (2R,3S)-3-isopropylmalate = (2S)-2-isopropylmalate. Its pathway is amino-acid biosynthesis; L-leucine biosynthesis; L-leucine from 3-methyl-2-oxobutanoate: step 2/4. Functionally, catalyzes the isomerization between 2-isopropylmalate and 3-isopropylmalate, via the formation of 2-isopropylmaleate. The chain is 3-isopropylmalate dehydratase large subunit from Actinobacillus pleuropneumoniae serotype 3 (strain JL03).